Consider the following 145-residue polypeptide: uncharacterized protein (145 aa).

The tract at residues 1–25 is disordered; it reads MSENNENDGFNLDPDVKEELEETKS. Residues 14–25 show a composition bias toward basic and acidic residues; that stretch reads PDVKEELEETKS.

This is an uncharacterized protein from His1 virus (isolate Australia/Victoria) (His1V).